The chain runs to 195 residues: GTP cyclohydrolase-2 (195 aa).

Residue arginine 48–glutamate 52 coordinates GTP. Zn(2+)-binding residues include cysteine 53, cysteine 64, and cysteine 66. GTP is bound by residues glutamine 69, glutamate 90–arginine 92, and threonine 112. Aspartate 124 serves as the catalytic Proton acceptor. Catalysis depends on arginine 126, which acts as the Nucleophile. Threonine 147 and lysine 152 together coordinate GTP.

Belongs to the GTP cyclohydrolase II family. It depends on Zn(2+) as a cofactor.

The enzyme catalyses GTP + 4 H2O = 2,5-diamino-6-hydroxy-4-(5-phosphoribosylamino)-pyrimidine + formate + 2 phosphate + 3 H(+). The protein operates within cofactor biosynthesis; riboflavin biosynthesis; 5-amino-6-(D-ribitylamino)uracil from GTP: step 1/4. Functionally, catalyzes the conversion of GTP to 2,5-diamino-6-ribosylamino-4(3H)-pyrimidinone 5'-phosphate (DARP), formate and pyrophosphate. This is GTP cyclohydrolase-2 from Campylobacter fetus subsp. fetus (strain 82-40).